Here is a 32-residue protein sequence, read N- to C-terminus: Photosystem II reaction center protein Z (32 aa).

The helical transmembrane segment at 12-32 threads the bilayer; the sequence is FGAAAWIGLVLLVGTLYYFVV.

This sequence belongs to the PsbZ family. As to quaternary structure, PSII is composed of 1 copy each of membrane proteins PsbA, PsbB, PsbC, PsbD, PsbE, PsbF, PsbH, PsbI, PsbJ, PsbK, PsbL, PsbM, PsbT, PsbY, PsbZ, Psb30/Ycf12, at least 3 peripheral proteins of the oxygen-evolving complex and a large number of cofactors. It forms dimeric complexes.

The protein localises to the plastid. Its subcellular location is the chloroplast thylakoid membrane. May control the interaction of photosystem II (PSII) cores with the light-harvesting antenna, regulates electron flow through the 2 photosystem reaction centers. PSII is a light-driven water plastoquinone oxidoreductase, using light energy to abstract electrons from H(2)O, generating a proton gradient subsequently used for ATP formation. This chain is Photosystem II reaction center protein Z, found in Euglena granulata.